A 501-amino-acid chain; its full sequence is Ribose import ATP-binding protein RbsA (501 aa).

ABC transporter domains are found at residues 6 to 242 (LQLS…VGRK) and 253 to 495 (VHGQ…VGKK). 38–45 (GENGAGKS) contributes to the ATP binding site.

Belongs to the ABC transporter superfamily. Ribose importer (TC 3.A.1.2.1) family. The complex is composed of an ATP-binding protein (RbsA), two transmembrane proteins (RbsC) and a solute-binding protein (RbsB).

It is found in the cell inner membrane. It catalyses the reaction D-ribose(out) + ATP + H2O = D-ribose(in) + ADP + phosphate + H(+). Functionally, part of the ABC transporter complex RbsABC involved in ribose import. Responsible for energy coupling to the transport system. The chain is Ribose import ATP-binding protein RbsA from Vibrio vulnificus (strain CMCP6).